The following is a 193-amino-acid chain: Secreted RxLR effector protein 126 (193 aa).

The signal sequence occupies residues 1-20 (MRYLLAVLIAAAFVISSGTS). Residues 50–64 (RMLQTKAVNGLEEER) carry the RxLR-dEER motif.

It belongs to the RxLR effector family.

It is found in the secreted. It localises to the host membrane. Functionally, secreted effector that completely suppresses the host cell death induced by cell death-inducing proteins. In Plasmopara viticola (Downy mildew of grapevine), this protein is Secreted RxLR effector protein 126.